The sequence spans 463 residues: Endoglucanase EG-1 (463 aa).

The first 22 residues, 1-22 (MAPSATLPLTTAILAIGRLVAA), serve as a signal peptide directing secretion. A catalytic region spans residues 23–397 (QQPGTSTPEV…DIGSTTNSTG (375 aa)). N78, N164, N204, and N208 each carry an N-linked (GlcNAc...) asparagine glycan. Residue E218 is the Nucleophile of the active site. E223 (proton donor) is an active-site residue. Residues 390-429 (GSTTNSTGGNPPPPPPPASSTTFSTTRRSSTTSSSPSCTQ) form a disordered region. N394 is a glycosylation site (N-linked (GlcNAc...) asparagine). Residues 402-427 (PPPPPASSTTFSTTRRSSTTSSSPSC) form a linker region. Residues 408-429 (SSTTFSTTRRSSTTSSSPSCTQ) show a composition bias toward low complexity. In terms of domain architecture, CBM1 spans 427-463 (CTQTHWGQCGGIGYTGCKTCTSGTTCQYGNDYYSQCL). Cystine bridges form between C435–C452 and C446–C462.

Belongs to the glycosyl hydrolase 7 (cellulase C) family.

The protein resides in the secreted. The enzyme catalyses Endohydrolysis of (1-&gt;4)-beta-D-glucosidic linkages in cellulose, lichenin and cereal beta-D-glucans.. Its function is as follows. The biological conversion of cellulose to glucose generally requires three types of hydrolytic enzymes: (1) Endoglucanases which cut internal beta-1,4-glucosidic bonds; (2) Exocellobiohydrolases that cut the disaccharide cellobiose from the non-reducing end of the cellulose polymer chain; (3) Beta-1,4-glucosidases which hydrolyze the cellobiose and other short cello-oligosaccharides to glucose. The polypeptide is Endoglucanase EG-1 (egl1) (Trichoderma longibrachiatum).